The following is a 555-amino-acid chain: Carboxylesterase patB (555 aa).

Positions 1–16 are cleaved as a signal peptide; the sequence is MLFTASLLLLLPWASA. 2 N-linked (GlcNAc...) asparagine glycosylation sites follow: N37 and N75. The Acyl-ester intermediate role is filled by S258. Residue S258 participates in substrate binding. N311 carries an N-linked (GlcNAc...) asparagine glycan. The Charge relay system role is filled by E380. N-linked (GlcNAc...) asparagine glycosylation is found at N388 and N491.

Belongs to the type-B carboxylesterase/lipase family.

The protein localises to the cytoplasm. It localises to the cytosol. The catalysed reaction is a carboxylic ester + H2O = an alcohol + a carboxylate + H(+). It functions in the pathway mycotoxin biosynthesis; patulin biosynthesis. Its function is as follows. Carboxylesterase; part of the gene cluster that mediates the biosynthesis of patulin, an acetate-derived tetraketide mycotoxin produced by several fungal species that shows antimicrobial properties against several bacteria. The function of patB in patulin synthesis has still to be characterized. The pathway begins with the synthesis of 6-methylsalicylic acid by the polyketide synthase (PKS) patK via condensation of acetate and malonate units. The 6-methylsalicylic acid decarboxylase patG then catalyzes the decarboxylation of 6-methylsalicylic acid to yield m-cresol (also known as 3-methylphenol). These first reactions occur in the cytosol. The intermediate m-cresol is then transported into the endoplasmic reticulum where the cytochrome P450 monooxygenase patH converts it to m-hydroxybenzyl alcohol, which is further converted to gentisyl alcohol by the cytochrome P450 monooxygenase patI. The oxidoreductases patJ and patO further convert gentisyl alcohol to isoepoxydon in the vacuole. PatN catalyzes then the transformation of isoepoxydon into phyllostine. The cluster protein patF is responsible for the conversion from phyllostine to neopatulin whereas the alcohol dehydrogenase patD converts neopatulin to E-ascladiol. The steps between isoepoxydon and E-ascladiol occur in the cytosol, and E-ascladiol is probably secreted to the extracellular space by one of the cluster-specific transporters patC or patM. Finally, the secreted patulin synthase patE catalyzes the conversion of E-ascladiol to patulin. This chain is Carboxylesterase patB, found in Aspergillus clavatus (strain ATCC 1007 / CBS 513.65 / DSM 816 / NCTC 3887 / NRRL 1 / QM 1276 / 107).